We begin with the raw amino-acid sequence, 513 residues long: Glucose-6-phosphate 1-dehydrogenase 2 (513 aa).

Ala-2 is subject to N-acetylalanine. Ser-8 carries the post-translational modification Phosphoserine. A Phosphothreonine modification is found at Thr-10. NADP(+) is bound by residues Gly-38 to Lys-45 and Arg-72. Residue Lys-89 is modified to N6-acetyllysine. NADP(+) is bound by residues Tyr-147 and Lys-171. Residues Lys-171, His-201–Lys-205, Glu-239, and Asp-258 each bind D-glucose 6-phosphate. Lys-171 is modified (N6-(2-hydroxyisobutyryl)lysine; alternate). Residue Lys-171 is modified to N6-acetyllysine; alternate. His-263 serves as the catalytic Proton acceptor. Arg-357 is an NADP(+) binding site. D-glucose 6-phosphate-binding residues include Lys-360 and Arg-365. NADP(+)-binding residues include Lys-366, Arg-370, and Arg-393. Residue Gln-395 participates in D-glucose 6-phosphate binding. Asp-421–Thr-423 contacts NADP(+). N6-acetyllysine is present on Lys-432. NADP(+)-binding residues include Arg-487 and Tyr-503. Tyr-503 is subject to Phosphotyrosine.

This sequence belongs to the glucose-6-phosphate dehydrogenase family. In terms of assembly, homotetramer; dimer of dimers. Interacts with SIRT2; the interaction is enhanced by H(2)O(2) treatment. In terms of processing, acetylated by ELP3; acetylation inhibits its homodimerization and enzyme activity. Deacetylated by SIRT2; deacetylation stimulates its enzyme activity. In terms of tissue distribution, testis.

It is found in the cytoplasm. The protein resides in the cytosol. Its subcellular location is the membrane. The catalysed reaction is D-glucose 6-phosphate + NADP(+) = 6-phospho-D-glucono-1,5-lactone + NADPH + H(+). The protein operates within carbohydrate degradation; pentose phosphate pathway; D-ribulose 5-phosphate from D-glucose 6-phosphate (oxidative stage): step 1/3. In terms of biological role, catalyzes the rate-limiting step of the oxidative pentose-phosphate pathway, which represents a route for the dissimilation of carbohydrates besides glycolysis. The main function of this enzyme is to provide reducing power (NADPH) and pentose phosphates for fatty acid and nucleic acid synthesis. The chain is Glucose-6-phosphate 1-dehydrogenase 2 (G6pd2) from Mus musculus (Mouse).